A 274-amino-acid polypeptide reads, in one-letter code: 4-hydroxy-3-methylbut-2-enyl diphosphate reductase (274 aa).

Position 12 (cysteine 12) interacts with [4Fe-4S] cluster. Positions 36 and 70 each coordinate (2E)-4-hydroxy-3-methylbut-2-enyl diphosphate. The dimethylallyl diphosphate site is built by histidine 36 and histidine 70. 2 residues coordinate isopentenyl diphosphate: histidine 36 and histidine 70. Cysteine 92 is a binding site for [4Fe-4S] cluster. Residue histidine 120 participates in (2E)-4-hydroxy-3-methylbut-2-enyl diphosphate binding. Histidine 120 contributes to the dimethylallyl diphosphate binding site. Histidine 120 is a binding site for isopentenyl diphosphate. Glutamate 122 serves as the catalytic Proton donor. Residue threonine 158 participates in (2E)-4-hydroxy-3-methylbut-2-enyl diphosphate binding. Cysteine 186 is a binding site for [4Fe-4S] cluster. Serine 214, serine 215, asparagine 216, and serine 258 together coordinate (2E)-4-hydroxy-3-methylbut-2-enyl diphosphate. The dimethylallyl diphosphate site is built by serine 214, serine 215, asparagine 216, and serine 258. Residues serine 214, serine 215, asparagine 216, and serine 258 each contribute to the isopentenyl diphosphate site.

The protein belongs to the IspH family. It depends on [4Fe-4S] cluster as a cofactor.

The catalysed reaction is isopentenyl diphosphate + 2 oxidized [2Fe-2S]-[ferredoxin] + H2O = (2E)-4-hydroxy-3-methylbut-2-enyl diphosphate + 2 reduced [2Fe-2S]-[ferredoxin] + 2 H(+). It catalyses the reaction dimethylallyl diphosphate + 2 oxidized [2Fe-2S]-[ferredoxin] + H2O = (2E)-4-hydroxy-3-methylbut-2-enyl diphosphate + 2 reduced [2Fe-2S]-[ferredoxin] + 2 H(+). Its pathway is isoprenoid biosynthesis; dimethylallyl diphosphate biosynthesis; dimethylallyl diphosphate from (2E)-4-hydroxy-3-methylbutenyl diphosphate: step 1/1. It functions in the pathway isoprenoid biosynthesis; isopentenyl diphosphate biosynthesis via DXP pathway; isopentenyl diphosphate from 1-deoxy-D-xylulose 5-phosphate: step 6/6. In terms of biological role, catalyzes the conversion of 1-hydroxy-2-methyl-2-(E)-butenyl 4-diphosphate (HMBPP) into a mixture of isopentenyl diphosphate (IPP) and dimethylallyl diphosphate (DMAPP). Acts in the terminal step of the DOXP/MEP pathway for isoprenoid precursor biosynthesis. This chain is 4-hydroxy-3-methylbut-2-enyl diphosphate reductase, found in Campylobacter curvus (strain 525.92).